Consider the following 966-residue polypeptide: Serine/threonine-protein kinase 10 (966 aa).

Phosphoserine is present on residues serine 13 and serine 20. The region spanning 36 to 294 is the Protein kinase domain; sequence WEIVGELGDG…AAQLLQHPFV (259 aa). ATP contacts are provided by residues 42 to 50 and lysine 65; that span reads LGDGAFGKV. Aspartate 157 (proton acceptor) is an active-site residue. An activation segment region spans residues 175–224; the sequence is DFGVSAKNLKTLQKRDSFIGTPYWMAPEVVLCETMKDAPYDYKADIWSLG. The residue at position 185 (threonine 185) is a Phosphothreonine; by autocatalysis. Position 191 is a phosphoserine (serine 191). Composition is skewed to polar residues over residues 341-363 and 371-392; these read TQDSANVTQPSLDSNKLLQDSST and QEPVSGSCSQPSGDGPLQTTSP. The tract at residues 341–497 is disordered; the sequence is TQDSANVTQP…NLSTSESMDY (157 aa). The span at 421 to 430 shows a compositional bias: basic and acidic residues; it reads IQMDEEKQIP. Phosphoserine occurs at positions 437, 449, 453, and 484. A compositionally biased stretch (polar residues) spans 438 to 456; sequence PAASKSQKANQSRPNSSAL. Residues 485–497 are compositionally biased toward polar residues; the sequence is DCSNLSTSESMDY. Phosphoserine occurs at positions 513 and 548. Residues 588-936 adopt a coiled-coil conformation; that stretch reads LQLEQMHKRF…LNQKKREQEM (349 aa). Disordered regions lie at residues 660–692, 826–865, and 901–966; these read KKEVKSEVEKLPRQQRKESMKQKMEEHSQKKQR, INGAGSASEQREKIKQFSQQEEKRQKAERLQQQQKHENQM, and LDES…GDAS. 2 stretches are compositionally biased toward basic and acidic residues: residues 834 to 865 and 901 to 946; these read EQREKIKQFSQQEEKRQKAERLQQQQKHENQM and LDES…EAEP. The residue at position 950 (threonine 950) is a Phosphothreonine. The span at 950 to 966 shows a compositional bias: polar residues; the sequence is TPSKASNFFPYSSGDAS.

This sequence belongs to the protein kinase superfamily. STE Ser/Thr protein kinase family. STE20 subfamily. In terms of assembly, homodimer; homodimerization is required for activation segment autophosphorylation. Autophosphorylates following homodimerization, leading to activation of the protein. As to expression, expressed predominantly in lymphoid organs such as spleen, thymus, and bone marrow.

The protein localises to the cell membrane. It carries out the reaction L-seryl-[protein] + ATP = O-phospho-L-seryl-[protein] + ADP + H(+). It catalyses the reaction L-threonyl-[protein] + ATP = O-phospho-L-threonyl-[protein] + ADP + H(+). With respect to regulation, inhibited by the pyrrole-indolinone inhibitor SU11274 (K00593): intercalates between the ATP-binding Lys-65 and alpha-C glutamate (Glu-81), resulting in a partial disordering of the lysine side chain. Also specifically inhibited by erlotinib. Slightly inhibited by gefitinib. Serine/threonine-protein kinase involved in regulation of lymphocyte migration. Phosphorylates MSN, and possibly PLK1. Involved in regulation of lymphocyte migration by mediating phosphorylation of ERM proteins such as MSN. Acts as a negative regulator of MAP3K1/MEKK1. May also act as a cell cycle regulator by acting as a polo kinase kinase: mediates phosphorylation of PLK1 in vitro; however such data require additional evidences in vivo. In Mus musculus (Mouse), this protein is Serine/threonine-protein kinase 10 (Stk10).